The primary structure comprises 383 residues: Delta(12) fatty acid desaturase FAD2 (383 aa).

Residues 1-29 (MGAGGRMQDPTNGGNKTEPEPIQRVPHEK) are disordered. Positions 17-29 (TEPEPIQRVPHEK) are enriched in basic and acidic residues. A run of 2 helical transmembrane segments spans residues 50–70 (VIRS…LYYI) and 85–105 (VAWP…WVIA). Residues 106 to 110 (HECGH) carry the Histidine box-1 motif. The helical transmembrane segment at 118–138 (WLDDTVGLVLHSFLLVPYFSW) threads the bilayer. The Histidine box-2 motif lies at 142-146 (HRRHH). Transmembrane regions (helical) follow at residues 180–200 (ILTL…FNVS), 226–246 (IFIS…LAMT), and 252–272 (VLTM…LITF). The short motif at 316–320 (HVAHH) is the Histidine box-3 element.

The protein belongs to the fatty acid desaturase type 1 family. In terms of tissue distribution, expressed in leaves, flower buds and developing seeds.

It is found in the membrane. Its pathway is lipid metabolism; polyunsaturated fatty acid biosynthesis. Its function is as follows. Catalyzes the desaturation of oleic acid to linoleic acid. Introduces a double bond at position 12 of 16:1(9Z) and 18:1(9Z). The chain is Delta(12) fatty acid desaturase FAD2 from Calendula officinalis (Pot marigold).